The sequence spans 294 residues: 4-hydroxy-tetrahydrodipicolinate synthase (294 aa).

Thr-48 contacts pyruvate. The active-site Proton donor/acceptor is the Tyr-136. The active-site Schiff-base intermediate with substrate is the Lys-164. Ile-206 is a pyruvate binding site.

Belongs to the DapA family. As to quaternary structure, homotetramer; dimer of dimers.

The protein resides in the cytoplasm. It catalyses the reaction L-aspartate 4-semialdehyde + pyruvate = (2S,4S)-4-hydroxy-2,3,4,5-tetrahydrodipicolinate + H2O + H(+). It functions in the pathway amino-acid biosynthesis; L-lysine biosynthesis via DAP pathway; (S)-tetrahydrodipicolinate from L-aspartate: step 3/4. Catalyzes the condensation of (S)-aspartate-beta-semialdehyde [(S)-ASA] and pyruvate to 4-hydroxy-tetrahydrodipicolinate (HTPA). This is 4-hydroxy-tetrahydrodipicolinate synthase from Phenylobacterium zucineum (strain HLK1).